A 178-amino-acid polypeptide reads, in one-letter code: Disulfide bond formation protein B (178 aa).

Topologically, residues 1-14 (MLSFFKTLSTKRSA) are cytoplasmic. The helical transmembrane segment at 15–31 (WFLLFSSALLLEAIALY) threads the bilayer. The Periplasmic segment spans residues 32–49 (FQHGMGLAPCVMCIYERV). Cysteine 41 and cysteine 44 form a disulfide bridge. The helical transmembrane segment at 50 to 65 (AILGIAFSGLLGLLYP) threads the bilayer. Residues 66 to 72 (SSMLLRL) lie on the Cytoplasmic side of the membrane. Residues 73–90 (VALLIGLSSAIKGLMISI) form a helical membrane-spanning segment. The Periplasmic segment spans residues 91-145 (THLDLQLYPAPWKQCSAVAEFPETLPLDQWFPALFLPSGSCSEVTWQFLGFSMVQ). Cysteines 105 and 131 form a disulfide. A helical membrane pass occupies residues 146–164 (WIVVIFALYTLLLALIFIS). At 165-177 (QVKRLKPKQRRLF) the chain is on the cytoplasmic side.

This sequence belongs to the DsbB family.

It localises to the cell inner membrane. Required for disulfide bond formation in some periplasmic proteins. Acts by oxidizing the DsbA protein. The chain is Disulfide bond formation protein B from Pasteurella multocida (strain Pm70).